We begin with the raw amino-acid sequence, 215 residues long: Large ribosomal subunit protein uL4 (215 aa).

The interval 46–76 (TAKSKNRAEVSGGGRKPWAQKGGGRARAGSI) is disordered. The span at 56-71 (SGGGRKPWAQKGGGRA) shows a compositional bias: gly residues.

Belongs to the universal ribosomal protein uL4 family. In terms of assembly, part of the 50S ribosomal subunit.

Functionally, one of the primary rRNA binding proteins, this protein initially binds near the 5'-end of the 23S rRNA. It is important during the early stages of 50S assembly. It makes multiple contacts with different domains of the 23S rRNA in the assembled 50S subunit and ribosome. In terms of biological role, forms part of the polypeptide exit tunnel. The chain is Large ribosomal subunit protein uL4 from Helicobacter pylori (strain HPAG1).